We begin with the raw amino-acid sequence, 251 residues long: Vitamin B12 import ATP-binding protein BtuD (251 aa).

Residues 2–236 form the ABC transporter domain; that stretch reads IRVNSLQVDS…EVLQSVFGTS (235 aa). 30 to 37 contributes to the ATP binding site; the sequence is GPNGCGKS.

It belongs to the ABC transporter superfamily. Vitamin B12 importer (TC 3.A.1.13.1) family. As to quaternary structure, the complex is composed of two ATP-binding proteins (BtuD), two transmembrane proteins (BtuC) and a solute-binding protein (BtuF).

It localises to the cell inner membrane. The catalysed reaction is an R-cob(III)alamin(out) + ATP + H2O = an R-cob(III)alamin(in) + ADP + phosphate + H(+). Functionally, part of the ABC transporter complex BtuCDF involved in vitamin B12 import. Responsible for energy coupling to the transport system. The polypeptide is Vitamin B12 import ATP-binding protein BtuD (Vibrio cholerae serotype O1 (strain ATCC 39541 / Classical Ogawa 395 / O395)).